The primary structure comprises 337 residues: Probable cytosolic iron-sulfur protein assembly protein 1 (337 aa).

WD repeat units follow at residues 11–50 (LHNDKVWSIDFEPVRGLLATGSTDRAIKVLQLKNGKENLL), 57–96 (VHKKAVRSVAWRPHSDLLAAGSFDSTISIWTQSDLDLEEG), 109–148 (GHENEVKGISWSQDGCLLATCSRDKSVWIWETDEAGEEYE), 155–194 (EHSQDVKHVVWHTKHNLLASSSYDDTVRIWKDYDDDWECA), 199–240 (GHEG…EDDQ), 252–290 (AHRSQIYGVAWSPSGRIASVGADGVLAVYKEKQNDSEVS), and 301–337 (AHTVYEINTVKWVNIDGKEMLITAGDDGRVNLWNYQD).

Belongs to the WD repeat CIA1 family. In terms of assembly, interacts with NAR1.

The protein resides in the cytoplasm. It is found in the nucleus. In terms of biological role, essential component of the cytosolic iron-sulfur (Fe/S) protein assembly machinery. Required for the maturation of extramitochondrial Fe/S proteins. The protein is Probable cytosolic iron-sulfur protein assembly protein 1 of Candida glabrata (strain ATCC 2001 / BCRC 20586 / JCM 3761 / NBRC 0622 / NRRL Y-65 / CBS 138) (Yeast).